The chain runs to 271 residues: uncharacterized protein (271 aa).

A run of 3 helical transmembrane segments spans residues 30–50 (IWFP…GMLL), 189–209 (ALAA…YFLI), and 218–238 (FLVT…IFAC).

It is found in the cell membrane. This is an uncharacterized protein from Aquifex aeolicus (strain VF5).